The primary structure comprises 426 residues: Glutamate-1-semialdehyde 2,1-aminomutase (426 aa).

Lys-265 is modified (N6-(pyridoxal phosphate)lysine).

This sequence belongs to the class-III pyridoxal-phosphate-dependent aminotransferase family. HemL subfamily. In terms of assembly, homodimer. Requires pyridoxal 5'-phosphate as cofactor.

It is found in the cytoplasm. It catalyses the reaction (S)-4-amino-5-oxopentanoate = 5-aminolevulinate. The protein operates within porphyrin-containing compound metabolism; protoporphyrin-IX biosynthesis; 5-aminolevulinate from L-glutamyl-tRNA(Glu): step 2/2. This is Glutamate-1-semialdehyde 2,1-aminomutase from Shigella sonnei (strain Ss046).